The chain runs to 166 residues: UPF0561 protein C2orf68 homolog (166 aa).

A compositionally biased stretch (basic and acidic residues) spans 36-49 (RDDYDKKVKQAAKE). The interval 36 to 108 (RDDYDKKVKQ…EPEPPGHQLF (73 aa)) is disordered.

It belongs to the UPF0561 family.

This chain is UPF0561 protein C2orf68 homolog, found in Bos taurus (Bovine).